The sequence spans 306 residues: MSWIERILNKSNITPTRRANIPEGVWTKCDSCGQVLYRAELERNLEVCPKCDHHMRMAARDRLHSLLDEGSLVELGSELEPKDVLKFRDSKKYKDRLATAQKETGEKDALVVMKGTLHGMPVVAAAFEFAFMGGSMGSVVGARFVRAVEQALEDNCPLICFSASGGARMQEALMSLMQMAKTSAALAKMQERGLPYISVLTDPTMGGVSASFAMLGDLNIAEPKALIGFAGPRVIEQTVREKLPAGFQRSEFLIEKGAIDMIVRRPELRLKLASILAKLMNLPAPSPDAPREAVVVPPVPDQDHEA.

In terms of domain architecture, CoA carboxyltransferase N-terminal spans 25–294 (VWTKCDSCGQ…PSPDAPREAV (270 aa)). 4 residues coordinate Zn(2+): Cys-29, Cys-32, Cys-48, and Cys-51. Residues 29 to 51 (CDSCGQVLYRAELERNLEVCPKC) form a C4-type zinc finger. A disordered region spans residues 286 to 306 (SPDAPREAVVVPPVPDQDHEA).

This sequence belongs to the AccD/PCCB family. As to quaternary structure, acetyl-CoA carboxylase is a heterohexamer composed of biotin carboxyl carrier protein (AccB), biotin carboxylase (AccC) and two subunits each of ACCase subunit alpha (AccA) and ACCase subunit beta (AccD). It depends on Zn(2+) as a cofactor.

Its subcellular location is the cytoplasm. It carries out the reaction N(6)-carboxybiotinyl-L-lysyl-[protein] + acetyl-CoA = N(6)-biotinyl-L-lysyl-[protein] + malonyl-CoA. It participates in lipid metabolism; malonyl-CoA biosynthesis; malonyl-CoA from acetyl-CoA: step 1/1. Component of the acetyl coenzyme A carboxylase (ACC) complex. Biotin carboxylase (BC) catalyzes the carboxylation of biotin on its carrier protein (BCCP) and then the CO(2) group is transferred by the transcarboxylase to acetyl-CoA to form malonyl-CoA. The sequence is that of Acetyl-coenzyme A carboxylase carboxyl transferase subunit beta from Cronobacter sakazakii (strain ATCC BAA-894) (Enterobacter sakazakii).